The sequence spans 482 residues: tRNA sulfurtransferase (482 aa).

The THUMP domain occupies 61-165 (DVTLSVLTQT…NDKLNLIIAR (105 aa)). Residues 183-184 (LI), Lys-265, Gly-287, and Gln-296 each bind ATP. Cys-344 and Cys-456 are joined by a disulfide. In terms of domain architecture, Rhodanese spans 404 to 482 (LGSDVVVLDI…GYKNVKVYRP (79 aa)). Cys-456 serves as the catalytic Cysteine persulfide intermediate.

The protein belongs to the ThiI family.

It is found in the cytoplasm. The enzyme catalyses [ThiI sulfur-carrier protein]-S-sulfanyl-L-cysteine + a uridine in tRNA + 2 reduced [2Fe-2S]-[ferredoxin] + ATP + H(+) = [ThiI sulfur-carrier protein]-L-cysteine + a 4-thiouridine in tRNA + 2 oxidized [2Fe-2S]-[ferredoxin] + AMP + diphosphate. It catalyses the reaction [ThiS sulfur-carrier protein]-C-terminal Gly-Gly-AMP + S-sulfanyl-L-cysteinyl-[cysteine desulfurase] + AH2 = [ThiS sulfur-carrier protein]-C-terminal-Gly-aminoethanethioate + L-cysteinyl-[cysteine desulfurase] + A + AMP + 2 H(+). It functions in the pathway cofactor biosynthesis; thiamine diphosphate biosynthesis. Functionally, catalyzes the ATP-dependent transfer of a sulfur to tRNA to produce 4-thiouridine in position 8 of tRNAs, which functions as a near-UV photosensor. Also catalyzes the transfer of sulfur to the sulfur carrier protein ThiS, forming ThiS-thiocarboxylate. This is a step in the synthesis of thiazole, in the thiamine biosynthesis pathway. The sulfur is donated as persulfide by IscS. The polypeptide is tRNA sulfurtransferase (Aliivibrio fischeri (strain MJ11) (Vibrio fischeri)).